The chain runs to 839 residues: Taste receptor type 1 member 2 (839 aa).

The N-terminal stretch at 1 to 19 is a signal peptide; it reads MRPRATTICSLFFLLRVLA. Over 20 to 566 the chain is Extracellular; it reads EPAKNSDFYL…AFLEWHEAPT (547 aa). N-linked (GlcNAc...) asparagine glycosylation is found at N84, N127, N248, N292, N312, N368, N428, N487, and N527. A helical membrane pass occupies residues 567 to 587; that stretch reads IVVALLAALGFLSTLAILVIF. Residues 588 to 602 lie on the Cytoplasmic side of the membrane; it reads WRHFQTPMVRSAGGP. Residues 603-623 traverse the membrane as a helical segment; it reads MCFLMLTLLLVAYMVVPVYVG. The Extracellular portion of the chain corresponds to 624-635; the sequence is PPKVSTCFCRQA. Residues 636 to 656 form a helical membrane-spanning segment; it reads LFPLCFTICISCIAVRSFQIV. Over 657 to 681 the chain is Cytoplasmic; that stretch reads CVFKMASRFPRAYSYWVRYQGPYVS. A helical transmembrane segment spans residues 682-702; it reads MAFITVLKMVTVVIGMLATGL. At 703–727 the chain is on the extracellular side; it reads NPTTRIDPDDPKIMIVSCNPNYRNS. The helical transmembrane segment at 728-748 threads the bilayer; it reads LFFNTGLDLLLSVVGFSFAYM. Topologically, residues 749–760 are cytoplasmic; sequence GKELPTNYNEAK. The helical transmembrane segment at 761 to 781 threads the bilayer; sequence FITLSMTFYFTSSVSLCTFMS. Residues 782-784 lie on the Extracellular side of the membrane; the sequence is AYN. A helical transmembrane segment spans residues 785-805; it reads GVLVTIMDLLVTVLNLLAISL. Residues 806–839 are Cytoplasmic-facing; the sequence is GYFGPKCYMILFYPERNTPAYFNSMIQGYTMRRD.

It belongs to the G-protein coupled receptor 3 family. TAS1R subfamily. As to quaternary structure, forms heterodimers with TAS1R3.

Its subcellular location is the cell membrane. In terms of biological role, putative taste receptor. TAS1R2/TAS1R3 recognizes diverse natural and synthetic sweeteners. The chain is Taste receptor type 1 member 2 (TAS1R2) from Papio hamadryas (Hamadryas baboon).